The primary structure comprises 90 residues: Probable Fe(2+)-trafficking protein (90 aa).

It belongs to the Fe(2+)-trafficking protein family.

Its function is as follows. Could be a mediator in iron transactions between iron acquisition and iron-requiring processes, such as synthesis and/or repair of Fe-S clusters in biosynthetic enzymes. This Acidovorax ebreus (strain TPSY) (Diaphorobacter sp. (strain TPSY)) protein is Probable Fe(2+)-trafficking protein.